The sequence spans 615 residues: Ectoine/glycine betaine/proline transporter EctP (615 aa).

12 helical membrane-spanning segments follow: residues 24–44 (FIFS…IALG), 62–82 (LGWM…GIFA), 102–122 (IVWF…FWGV), 156–176 (FGIH…YFIY), 207–227 (LAIV…VLQI), 240–260 (VSWV…ISVA), 275–295 (IAMA…LTLL), 329–349 (WTVF…MFVA), 360–380 (FIGG…SIFG), 417–437 (LTGI…ITSI), 463–483 (WACT…SSGI), and 489–509 (VVII…FSLL). Disordered stretches follow at residues 524 to 562 (TRQW…LEHD) and 589 to 615 (PEEA…EYDI). 2 stretches are compositionally biased toward basic and acidic residues: residues 526 to 540 (QWEK…EEHS) and 600 to 615 (KIVE…EYDI).

This sequence belongs to the BCCT transporter (TC 2.A.15) family.

The protein resides in the cell membrane. Its function is as follows. Involved in the uptake of osmoprotectants. Can transport ectoine, proline and glycine betaine. Na(+) is probably the coupling ion. The protein is Ectoine/glycine betaine/proline transporter EctP of Corynebacterium glutamicum (strain ATCC 13032 / DSM 20300 / JCM 1318 / BCRC 11384 / CCUG 27702 / LMG 3730 / NBRC 12168 / NCIMB 10025 / NRRL B-2784 / 534).